We begin with the raw amino-acid sequence, 79 residues long: Dolichyl-diphosphooligosaccharide--protein glycosyltransferase subunit TMEM258 (79 aa).

The next 2 membrane-spanning stretches (helical) occupy residues 18–38 (LPLLATVLCGVGLLLLAAFTM) and 55–75 (FIAATSSIFLGFGSVFLLLWV).

The protein belongs to the OST5 family. In terms of assembly, component of the oligosaccharyltransferase (OST) complex.

The protein localises to the membrane. It participates in protein modification; protein glycosylation. Functionally, subunit of the oligosaccharyl transferase (OST) complex that catalyzes the initial transfer of a defined glycan (Glc(3)Man(9)GlcNAc(2) in eukaryotes) from the lipid carrier dolichol-pyrophosphate to an asparagine residue within an Asn-X-Ser/Thr consensus motif in nascent polypeptide chains, the first step in protein N-glycosylation. N-glycosylation occurs cotranslationally and the complex associates with the Sec61 complex at the channel-forming translocon complex that mediates protein translocation across the endoplasmic reticulum (ER). All subunits are required for a maximal enzyme activity. This chain is Dolichyl-diphosphooligosaccharide--protein glycosyltransferase subunit TMEM258, found in Caenorhabditis briggsae.